Consider the following 451-residue polypeptide: Probable asparagine--tRNA ligase, cytoplasmic (451 aa).

It belongs to the class-II aminoacyl-tRNA synthetase family.

It localises to the cytoplasm. It carries out the reaction tRNA(Asn) + L-asparagine + ATP = L-asparaginyl-tRNA(Asn) + AMP + diphosphate + H(+). This is Probable asparagine--tRNA ligase, cytoplasmic from Encephalitozoon cuniculi (strain GB-M1) (Microsporidian parasite).